A 213-amino-acid chain; its full sequence is Ribosomal RNA small subunit methyltransferase G (213 aa).

S-adenosyl-L-methionine is bound by residues Gly77, Met82, 104–106 (EKS), and Arg145.

This sequence belongs to the methyltransferase superfamily. RNA methyltransferase RsmG family.

The protein localises to the cytoplasm. It carries out the reaction guanosine(527) in 16S rRNA + S-adenosyl-L-methionine = N(7)-methylguanosine(527) in 16S rRNA + S-adenosyl-L-homocysteine. In terms of biological role, specifically methylates the N7 position of guanine in position 527 of 16S rRNA. In Pelagibacter ubique (strain HTCC1062), this protein is Ribosomal RNA small subunit methyltransferase G.